The chain runs to 264 residues: 3-methyl-2-oxobutanoate hydroxymethyltransferase (264 aa).

2 residues coordinate Mg(2+): Asp45 and Asp84. Residues 45-46 (DS), Asp84, and Lys112 each bind 3-methyl-2-oxobutanoate. Residue Glu114 coordinates Mg(2+). Glu181 acts as the Proton acceptor in catalysis.

It belongs to the PanB family. Homodecamer; pentamer of dimers. The cofactor is Mg(2+).

Its subcellular location is the cytoplasm. It catalyses the reaction 3-methyl-2-oxobutanoate + (6R)-5,10-methylene-5,6,7,8-tetrahydrofolate + H2O = 2-dehydropantoate + (6S)-5,6,7,8-tetrahydrofolate. It participates in cofactor biosynthesis; (R)-pantothenate biosynthesis; (R)-pantoate from 3-methyl-2-oxobutanoate: step 1/2. Catalyzes the reversible reaction in which hydroxymethyl group from 5,10-methylenetetrahydrofolate is transferred onto alpha-ketoisovalerate to form ketopantoate. This chain is 3-methyl-2-oxobutanoate hydroxymethyltransferase, found in Shewanella piezotolerans (strain WP3 / JCM 13877).